Consider the following 358-residue polypeptide: Feruloyl esterase B (358 aa).

The signal sequence occupies residues 1 to 18 (MAIPLVLLLAWLLPTVFA). A catalytic region spans residues 19–291 (ASLTQVSNFG…VSVVLDWFGI (273 aa)). Serine 136 (charge relay system) is an active-site residue. N-linked (GlcNAc...) asparagine glycosylation is found at asparagine 179 and asparagine 246. Residues 292-321 (TGGGGGNGGGSGSTTTTTSATTTSTGPTGG) are gly/Thr-rich linker. The tract at residues 297 to 318 (GNGGGSGSTTTTTSATTTSTGP) is disordered. The span at 304-318 (STTTTTSATTTSTGP) shows a compositional bias: low complexity. The CBM1 domain maps to 322 to 358 (CTAAHWDQCGGNGYTGCTSCASPYTCQKVNDYYSQCL).

The protein belongs to the carbohydrate esterase 1 (CE1) family. Feruloyl esterase type B subfamily.

The protein resides in the secreted. The enzyme catalyses feruloyl-polysaccharide + H2O = ferulate + polysaccharide.. Involved in degradation of plant cell walls. Hydrolyzes the feruloyl-arabinose ester bond in arabinoxylans as well as the feruloyl-galactose and feruloyl-arabinose ester bonds in pectin. Active against methyl esters of caffeate (MCA), but not sinapate (MSA). The protein is Feruloyl esterase B (faeB) of Talaromyces stipitatus (strain ATCC 10500 / CBS 375.48 / QM 6759 / NRRL 1006) (Penicillium stipitatum).